The chain runs to 413 residues: Elongation factor 1-alpha (413 aa).

One can recognise a tr-type G domain in the interval 5–211; the sequence is KEHMNLAFIG…DDLEAPEKPV (207 aa). A G1 region spans residues 14-21; the sequence is GHVDHGKS. 14-21 provides a ligand contact to GTP; that stretch reads GHVDHGKS. A Mg(2+)-binding site is contributed by serine 21. The interval 60 to 64 is G2; sequence GVTID. The segment at 81 to 84 is G3; the sequence is DCPG. Residues 81 to 85 and 136 to 139 each bind GTP; these read DCPGH and NKMD. The tract at residues 136–139 is G4; that stretch reads NKMD. The segment at 175-177 is G5; it reads SAF.

The protein belongs to the TRAFAC class translation factor GTPase superfamily. Classic translation factor GTPase family. EF-Tu/EF-1A subfamily.

It is found in the cytoplasm. The catalysed reaction is GTP + H2O = GDP + phosphate + H(+). Its function is as follows. GTP hydrolase that promotes the GTP-dependent binding of aminoacyl-tRNA to the A-site of ribosomes during protein biosynthesis. This is Elongation factor 1-alpha from Methanothermobacter thermautotrophicus (strain ATCC 29096 / DSM 1053 / JCM 10044 / NBRC 100330 / Delta H) (Methanobacterium thermoautotrophicum).